Consider the following 306-residue polypeptide: Cell division protein ZipA (306 aa).

Residues 1 to 6 (MENLQL) lie on the Periplasmic side of the membrane. The chain crosses the membrane as a helical span at residues 7–27 (VLLLIGAIAIIAVLVHGFWSI). Over 28 to 306 (RKQQPKGYKQ…NYIQRIRAQA (279 aa)) the chain is Cytoplasmic.

The protein belongs to the ZipA family. In terms of assembly, interacts with FtsZ via their C-terminal domains.

The protein resides in the cell inner membrane. Functionally, essential cell division protein that stabilizes the FtsZ protofilaments by cross-linking them and that serves as a cytoplasmic membrane anchor for the Z ring. Also required for the recruitment to the septal ring of downstream cell division proteins. In Shewanella halifaxensis (strain HAW-EB4), this protein is Cell division protein ZipA.